We begin with the raw amino-acid sequence, 320 residues long: 33 kDa chaperonin (320 aa).

A compositionally biased stretch (basic and acidic residues) spans 1–17; that stretch reads MTDASGSERLKRTKDIS. Residues 1–27 form a disordered region; the sequence is MTDASGSERLKRTKDISESTPPSSLPD. Disulfide bonds link cysteine 262–cysteine 264 and cysteine 295–cysteine 298.

Belongs to the HSP33 family. In terms of processing, under oxidizing conditions two disulfide bonds are formed involving the reactive cysteines. Under reducing conditions zinc is bound to the reactive cysteines and the protein is inactive.

It localises to the cytoplasm. Functionally, redox regulated molecular chaperone. Protects both thermally unfolding and oxidatively damaged proteins from irreversible aggregation. Plays an important role in the bacterial defense system toward oxidative stress. This chain is 33 kDa chaperonin, found in Synechococcus sp. (strain JA-3-3Ab) (Cyanobacteria bacterium Yellowstone A-Prime).